Reading from the N-terminus, the 435-residue chain is Serine/threonine-protein kinase 40 (435 aa).

One can recognise a Protein kinase domain in the interval 35–332 (FILGPRLGNS…DVLEALSAII (298 aa)). ATP is bound by residues 41-49 (LGNSPVPSI) and Lys66. The active-site Proton acceptor is Asp197.

This sequence belongs to the protein kinase superfamily. CAMK Ser/Thr protein kinase family.

It localises to the nucleus. The protein resides in the cytoplasm. The enzyme catalyses L-seryl-[protein] + ATP = O-phospho-L-seryl-[protein] + ADP + H(+). It catalyses the reaction L-threonyl-[protein] + ATP = O-phospho-L-threonyl-[protein] + ADP + H(+). Its function is as follows. May be a negative regulator of NF-kappa-B and p53-mediated gene transcription. This chain is Serine/threonine-protein kinase 40 (Stk40), found in Rattus norvegicus (Rat).